Reading from the N-terminus, the 226-residue chain is Glutathione peroxidase 3 (226 aa).

A signal peptide spans 1-24 (MARLLQASCLLSLLLAGFLPQSRG). Selenocysteine 73 is an active-site residue. Residue selenocysteine 73 is a non-standard amino acid, selenocysteine.

The protein belongs to the glutathione peroxidase family. Homotetramer. Secreted in plasma.

Its subcellular location is the secreted. It catalyses the reaction 2 glutathione + H2O2 = glutathione disulfide + 2 H2O. The catalysed reaction is tert-butyl hydroperoxide + 2 glutathione = tert-butanol + glutathione disulfide + H2O. Functionally, protects cells and enzymes from oxidative damage, by catalyzing the reduction of hydrogen peroxide, lipid peroxides and organic hydroperoxide, by glutathione. This is Glutathione peroxidase 3 from Sapajus apella (Brown-capped capuchin).